We begin with the raw amino-acid sequence, 740 residues long: MEQTYEYAWIIPFIPLPVPMLIGAGLFLFPTATKSFRRMWAFQSVLLLSIVMVFSIYLSIQQINSSSFYQYVWSWIINNDFSLDFGYLIDPLTSIMSILITTVGIMVLIYSDNYMAHDQGYLRFFAYMSFFSTSMLGLVTSSNLIQIYIFWELVGLCSYLLIGFWFTRPVAANACQKAFVTNRVGDFGLLLGILGFYWITGSFEFRDLFEIFNNLIYNNEVDFLFVTLCAVLLFAGAVAKSAQFPLHVWLPDAMEGPTPISALIHAATMVAAGIFLVARLLPLFRVIPYIMYLISVIGIITVLLGATLALAQKDIKRGLAYSTMSQLGYMMLALGMGSYRSALFHLITHAYSKALLFLGSGSIIHSMETIVGYSPAKSQNMGLMGGLRKHVPISKITFLLGTLSLCGIPPLACFWSKDEILNDSWLYSPIFAIIAWATAGLTAFYMFRIYLLTFEGHLNAHFPNYGGKQKTPFYSISLWGKNGVKKNSCLLTMNNNESTYFFAKTKYPIDKNGRKMTRPFMTIAHFEHKAVYSYPYESDNTMLFPIFVLGLFTLFVGSIGIPFNQEGGNLDILSKWLAPSINLLHQKSNNSMDWNEFLKDAVLSVSIAYFGIFIASFLYKPIYSSLKNFELINSFVKKGPKRILWDKIINGIYDWSYNRAYIDAFYTRFLVGGIRGLAEFTHFFDRRVIDGMTNGVGVISFIVGEGIKYIGGGRISSYLFLYLAYVSIFLLVYYLLFSTL.

16 consecutive transmembrane segments (helical) span residues 9 to 29 (WIIP…LFLF), 40 to 60 (WAFQ…YLSI), 89 to 109 (IDPL…MVLI), 125 to 145 (FAYM…SNLI), 147 to 167 (IYIF…FWFT), 185 to 205 (GDFG…SFEF), 219 to 239 (NEVD…GAVA), 258 to 278 (TPIS…FLVA), 286 to 306 (VIPY…LLGA), 327 to 347 (LGYM…FHLI), 354 to 374 (ALLF…VGYS), 396 to 416 (ITFL…CFWS), 425 to 445 (WLYS…TAFY), 543 to 563 (LFPI…GIPF), 602 to 622 (VLSV…YKPI), and 717 to 737 (SYLF…YLLF).

This sequence belongs to the complex I subunit 5 family. In terms of assembly, NDH is composed of at least 16 different subunits, 5 of which are encoded in the nucleus.

It is found in the plastid. The protein localises to the chloroplast thylakoid membrane. It catalyses the reaction a plastoquinone + NADH + (n+1) H(+)(in) = a plastoquinol + NAD(+) + n H(+)(out). It carries out the reaction a plastoquinone + NADPH + (n+1) H(+)(in) = a plastoquinol + NADP(+) + n H(+)(out). Functionally, NDH shuttles electrons from NAD(P)H:plastoquinone, via FMN and iron-sulfur (Fe-S) centers, to quinones in the photosynthetic chain and possibly in a chloroplast respiratory chain. The immediate electron acceptor for the enzyme in this species is believed to be plastoquinone. Couples the redox reaction to proton translocation, and thus conserves the redox energy in a proton gradient. This chain is NAD(P)H-quinone oxidoreductase subunit 5, chloroplastic (ndhF), found in Nicotiana tabacum (Common tobacco).